The following is a 173-amino-acid chain: Cytochrome c-type biogenesis protein CcmE (173 aa).

Topologically, residues 1 to 8 (MNPRRKSR) are cytoplasmic. The chain crosses the membrane as a helical; Signal-anchor for type II membrane protein span at residues 9–29 (FKLVIFVVLGIAIASGLMLYA). The Periplasmic portion of the chain corresponds to 30–173 (LRQNIDLFYT…RDRQEKEGAK (144 aa)). Positions 131 and 135 each coordinate heme. Residues 152–173 (GIKAADLKGESARDRQEKEGAK) form a disordered region. The segment covering 156-173 (ADLKGESARDRQEKEGAK) has biased composition (basic and acidic residues).

Belongs to the CcmE/CycJ family.

It localises to the cell inner membrane. In terms of biological role, heme chaperone required for the biogenesis of c-type cytochromes. Transiently binds heme delivered by CcmC and transfers the heme to apo-cytochromes in a process facilitated by CcmF and CcmH. The sequence is that of Cytochrome c-type biogenesis protein CcmE from Haemophilus influenzae (strain PittEE).